The primary structure comprises 248 residues: Pyridoxine 5'-phosphate synthase (248 aa).

Asparagine 12 contributes to the 3-amino-2-oxopropyl phosphate binding site. 14 to 15 is a binding site for 1-deoxy-D-xylulose 5-phosphate; sequence DH. Arginine 23 is a binding site for 3-amino-2-oxopropyl phosphate. Histidine 48 serves as the catalytic Proton acceptor. 1-deoxy-D-xylulose 5-phosphate-binding residues include arginine 50 and histidine 55. Glutamate 75 (proton acceptor) is an active-site residue. Threonine 105 contacts 1-deoxy-D-xylulose 5-phosphate. Histidine 196 serves as the catalytic Proton donor. Residues glycine 197 and 218-219 contribute to the 3-amino-2-oxopropyl phosphate site; that span reads GH.

Belongs to the PNP synthase family. As to quaternary structure, homooctamer; tetramer of dimers.

Its subcellular location is the cytoplasm. The catalysed reaction is 3-amino-2-oxopropyl phosphate + 1-deoxy-D-xylulose 5-phosphate = pyridoxine 5'-phosphate + phosphate + 2 H2O + H(+). It functions in the pathway cofactor biosynthesis; pyridoxine 5'-phosphate biosynthesis; pyridoxine 5'-phosphate from D-erythrose 4-phosphate: step 5/5. In terms of biological role, catalyzes the complicated ring closure reaction between the two acyclic compounds 1-deoxy-D-xylulose-5-phosphate (DXP) and 3-amino-2-oxopropyl phosphate (1-amino-acetone-3-phosphate or AAP) to form pyridoxine 5'-phosphate (PNP) and inorganic phosphate. The sequence is that of Pyridoxine 5'-phosphate synthase from Azotobacter vinelandii (strain DJ / ATCC BAA-1303).